Consider the following 24-residue polypeptide: Osteocalcin (24 aa).

The Gla domain maps to 1–24 (REVCELNPDCDELADHIGFQEAYR). The Ca(2+) site is built by glutamate 2, glutamate 5, and aspartate 11. 2 positions are modified to 4-carboxyglutamate: glutamate 2 and glutamate 5. Residues cysteine 4 and cysteine 10 are joined by a disulfide bond.

It belongs to the osteocalcin/matrix Gla protein family. Post-translationally, gamma-carboxyglutamate residues are formed by vitamin K dependent carboxylation by GGCX. These residues are essential for the binding of calcium. Decarboxylation promotes the hormone activity.

The protein localises to the secreted. Functionally, the carboxylated form is one of the main organic components of the bone matrix, which constitutes 1-2% of the total bone protein: it acts as a negative regulator of bone formation and is required to limit bone formation without impairing bone resorption or mineralization. The carboxylated form binds strongly to apatite and calcium. The uncarboxylated form acts as a hormone secreted by osteoblasts, which regulates different cellular processes, such as energy metabolism, male fertility and brain development. Regulates of energy metabolism by acting as a hormone favoring pancreatic beta-cell proliferation, insulin secretion and sensitivity and energy expenditure. Uncarboxylated osteocalcin hormone also promotes testosterone production in the testes: acts as a ligand for G protein-coupled receptor GPRC6A at the surface of Leydig cells, initiating a signaling response that promotes the expression of enzymes required for testosterone synthesis in a CREB-dependent manner. Also acts as a regulator of brain development: osteocalcin hormone crosses the blood-brain barrier and acts as a ligand for GPR158 on neurons, initiating a signaling response that prevents neuronal apoptosis in the hippocampus, favors the synthesis of all monoamine neurotransmitters and inhibits that of gamma-aminobutyric acid (GABA). Osteocalcin also crosses the placenta during pregnancy and maternal osteocalcin is required for fetal brain development. The chain is Osteocalcin from Homo sapiens neanderthalensis (Neanderthal).